The primary structure comprises 290 residues: Tubulin beta-4B chain (290 aa).

An MREI motif motif is present at residues 1–4 (MREI). Q11 provides a ligand contact to GTP. Residue T55 is modified to Phosphothreonine. Position 58 is an N6-acetyllysine (K58). Positions 69, 138, 142, 143, 144, and 172 each coordinate GTP. E69 serves as a coordination point for Mg(2+).

The protein belongs to the tubulin family. In terms of assembly, dimer of alpha and beta chains. A typical microtubule is a hollow water-filled tube with an outer diameter of 25 nm and an inner diameter of 15 nM. Alpha-beta heterodimers associate head-to-tail to form protofilaments running lengthwise along the microtubule wall with the beta-tubulin subunit facing the microtubule plus end conferring a structural polarity. Microtubules usually have 13 protofilaments but different protofilament numbers can be found in some organisms and specialized cells. Component of sperm flagellar doublet microtubules. It depends on Mg(2+) as a cofactor. Some glutamate residues at the C-terminus are polyglycylated, resulting in polyglycine chains on the gamma-carboxyl group. Glycylation is mainly limited to tubulin incorporated into axonemes (cilia and flagella) whereas glutamylation is prevalent in neuronal cells, centrioles, axonemes, and the mitotic spindle. Both modifications can coexist on the same protein on adjacent residues, and lowering polyglycylation levels increases polyglutamylation, and reciprocally. Cilia and flagella glycylation is required for their stability and maintenance. Flagella glycylation controls sperm motility. In terms of processing, some glutamate residues at the C-terminus are polyglutamylated, resulting in polyglutamate chains on the gamma-carboxyl group. Polyglutamylation plays a key role in microtubule severing by spastin (SPAST). SPAST preferentially recognizes and acts on microtubules decorated with short polyglutamate tails: severing activity by SPAST increases as the number of glutamates per tubulin rises from one to eight, but decreases beyond this glutamylation threshold. Glutamylation is also involved in cilia motility.

The protein localises to the cytoplasm. Its subcellular location is the cytoskeleton. The protein resides in the flagellum axoneme. Functionally, tubulin is the major constituent of microtubules, a cylinder consisting of laterally associated linear protofilaments composed of alpha- and beta-tubulin heterodimers. Microtubules grow by the addition of GTP-tubulin dimers to the microtubule end, where a stabilizing cap forms. Below the cap, tubulin dimers are in GDP-bound state, owing to GTPase activity of alpha-tubulin. In Mesocricetus auratus (Golden hamster), this protein is Tubulin beta-4B chain (TUBB4B).